We begin with the raw amino-acid sequence, 343 residues long: Protein RecA (343 aa).

Residue 64–71 (GPESSGKT) participates in ATP binding.

It belongs to the RecA family.

It is found in the cytoplasm. Its function is as follows. Can catalyze the hydrolysis of ATP in the presence of single-stranded DNA, the ATP-dependent uptake of single-stranded DNA by duplex DNA, and the ATP-dependent hybridization of homologous single-stranded DNAs. It interacts with LexA causing its activation and leading to its autocatalytic cleavage. The protein is Protein RecA of Acidiphilium cryptum (strain JF-5).